The following is a 757-amino-acid chain: Primary amine oxidase (757 aa).

Residues methionine 1–alanine 30 form the signal peptide. Substrate contacts are provided by residues tyrosine 411–leucine 422 and valine 493–tyrosine 498. Residue aspartate 413 is the Proton acceptor of the active site. Tyrosine 496 serves as the catalytic Schiff-base intermediate with substrate; via topaquinone. Tyrosine 496 is subject to 2',4',5'-topaquinone. Positions 554 and 556 each coordinate Cu cation. Residues aspartate 563, leucine 564, aspartate 565, glutamate 603, tyrosine 697, aspartate 700, glutamate 702, aspartate 708, and alanine 709 each coordinate Ca(2+). Residue aspartate 563 coordinates Mn(2+). Aspartate 565 serves as a coordination point for Mn(2+). A disordered region spans residues proline 680–asparagine 701. Mn(2+) is bound at residue aspartate 708. Residue histidine 719 participates in Cu cation binding.

This sequence belongs to the copper/topaquinone oxidase family. In terms of assembly, homodimer. Cu cation is required as a cofactor. Zn(2+) serves as cofactor. Requires Ca(2+) as cofactor. It depends on L-topaquinone as a cofactor. The cofactor is Mn(2+). Topaquinone (TPQ) is generated by copper-dependent autoxidation of a specific tyrosyl residue.

It localises to the periplasm. It carries out the reaction a primary methyl amine + O2 + H2O = an aldehyde + H2O2 + NH4(+). It catalyses the reaction 2-phenylethylamine + O2 + H2O = 2-phenylacetaldehyde + H2O2 + NH4(+). It functions in the pathway amino-acid degradation; L-phenylalanine degradation; phenylacetate from L-phenylalanine: step 2/3. With respect to regulation, inhibited by 2-hydrazinopyridine. Its function is as follows. The enzyme prefers aromatic over aliphatic amines. In Escherichia coli (strain K12), this protein is Primary amine oxidase (tynA).